The following is a 66-amino-acid chain: Large ribosomal subunit protein bL35 (66 aa).

Basic residues predominate over residues 1-44; the sequence is MPKLKSHRGAAKRFRKTASGAIKRRGAYRNHILTKKSTKQKRHL. The tract at residues 1–48 is disordered; that stretch reads MPKLKSHRGAAKRFRKTASGAIKRRGAYRNHILTKKSTKQKRHLRVEA.

The protein belongs to the bacterial ribosomal protein bL35 family.

The protein is Large ribosomal subunit protein bL35 of Legionella pneumophila (strain Corby).